Reading from the N-terminus, the 709-residue chain is DCC-interacting protein 13-alpha (709 aa).

A required for RAB5A binding region spans residues 1–428 (MPGIDKLPIE…RPPTARTSSS (428 aa)). The 266-residue stretch at 3–268 (GIDKLPIEET…DPLYVPDPDP (266 aa)) folds into the BAR domain. Residues 215–259 (SENLNEQLEEFLANIGTSVQNVRREMDSDIETMQQTIEDLEVASD) adopt a coiled-coil conformation. The PH domain occupies 277–375 (LTRKAGYLNA…WICTINNISK (99 aa)). Disordered regions lie at residues 397-434 (AVTP…LGSE), 467-491 (GQAK…STKS), and 645-709 (VKEK…ESEA). Position 399 is a phosphothreonine (Thr399). Ser401 bears the Phosphoserine mark. The F&amp;H motif lies at 403–414 (SFQQRHESLRPA). Ser410 is modified (phosphoserine; by PKA). The PID domain maps to 496 to 656 (SILHQLFIVR…EKQQKELNKQ (161 aa)). A coiled-coil region spans residues 621-673 (LAKQIALHAELDRRASEKQKEIERVKEKQQKELNKQKQIEKDLEEQSRLIAAS). Residues 645–667 (VKEKQQKELNKQKQIEKDLEEQS) are compositionally biased toward basic and acidic residues. Over residues 674-693 (SRPNQASSEGQFVVLSSSQS) the composition is skewed to polar residues. 2 positions are modified to phosphoserine: Ser693 and Ser696. Positions 700-709 (EGGKKRESEA) are enriched in basic and acidic residues.

As to quaternary structure, homodimer. Binds RAB5A/Rab5 through an N-terminal domain. This interaction is essential for its recruitment to endosomal membranes as well as its role in cell proliferation. Binds DCC and the catalytic domain of the inactive form of AKT2 through its PID domain. Binds PIK3CA and subunits of the NuRD/MeCP1 complex. Interacts with OCRL and INPP5B. Interacts with NTRK2. Interacts with APPL2; interaction is independent of follicle stimulating hormone stimulation; interaction is decreased by adiponectin in a time-dependent manner. Forms a complex with APPL2 and RUVBL2. Forms a complex comprising APPL2, RUVBL2, CTNNB1, HDAC1 and HDAC2; interaction reduces interaction between CTNNB1, HDAC1, HDAC2 and RUVBL2 leading to the decrease of deacetylase activity of this complex; affects the recruitment of repressive complexes to the Wnt target genes. Interacts with ANXA2. Interacts with TGFBR1; interaction is TGF beta dependent; mediates trafficking of the TGFBR1 from the endosomes to the nucleus via microtubules in a TRAF6-dependent manner. Interacts with PRKCZ. Interacts with PIK3R1 and APPL2. Interacts with ADIPOR1; ADIPOQ enhances this interaction; inhibites adiponectin-stimulated binding of APPL2 to ADIPOR1. In terms of processing, phosphorylation at Ser-410 by PKA severely impairs binding to OCRL. High levels in heart, ovary, pancreas and skeletal muscle.

It localises to the early endosome membrane. It is found in the nucleus. The protein resides in the cytoplasm. Its subcellular location is the endosome. The protein localises to the cell projection. It localises to the ruffle. It is found in the cytoplasmic vesicle. The protein resides in the phagosome. Multifunctional adapter protein that binds to various membrane receptors, nuclear factors and signaling proteins to regulate many processes, such as cell proliferation, immune response, endosomal trafficking and cell metabolism. Regulates signaling pathway leading to cell proliferation through interaction with RAB5A and subunits of the NuRD/MeCP1 complex. Functions as a positive regulator of innate immune response via activation of AKT1 signaling pathway by forming a complex with APPL1 and PIK3R1. Inhibits Fc-gamma receptor-mediated phagocytosis through PI3K/Akt signaling in macrophages. Regulates TLR4 signaling in activated macrophages. Involved in trafficking of the TGFBR1 from the endosomes to the nucleus via microtubules in a TRAF6-dependent manner. Plays a role in cell metabolism by regulating adiponecting and insulin signaling pathways. Required for fibroblast migration through HGF cell signaling. Positive regulator of beta-catenin/TCF-dependent transcription through direct interaction with RUVBL2/reptin resulting in the relief of RUVBL2-mediated repression of beta-catenin/TCF target genes by modulating the interactions within the beta-catenin-reptin-HDAC complex. The polypeptide is DCC-interacting protein 13-alpha (Homo sapiens (Human)).